A 420-amino-acid chain; its full sequence is Diphosphomevalonate decarboxylase 2 (420 aa).

Position 25–28 (25–28 (YWGK)) interacts with (R)-5-diphosphomevalonate. The short motif at 42–50 (SVTLDPDHL) is the Peroxisomal targeting signal PTS2 element. (R)-5-diphosphomevalonate is bound by residues arginine 80, 163 to 168 (SGSACR), and threonine 219.

This sequence belongs to the diphosphomevalonate decarboxylase family. As to quaternary structure, homodimer.

It localises to the peroxisome. The enzyme catalyses (R)-5-diphosphomevalonate + ATP = isopentenyl diphosphate + ADP + phosphate + CO2. It participates in isoprenoid biosynthesis; isopentenyl diphosphate biosynthesis via mevalonate pathway; isopentenyl diphosphate from (R)-mevalonate: step 3/3. Performs the first committed step in the biosynthesis of isoprene-containing compounds such as sterols and terpenoids. Component of the triterpenes (e.g. ginsenosides or panaxosides) and phytosterols biosynthetic pathways. Promotes the accumulation of stigmasterol and beta-sitosterol. The chain is Diphosphomevalonate decarboxylase 2 from Panax ginseng (Korean ginseng).